The sequence spans 532 residues: Probable cytochrome c oxidase subunit 1 (532 aa).

Helical transmembrane passes span 33–53, 74–94, 95–115, 118–138, 163–183, 200–220, 252–272, and 284–304; these read IMYIIFAVFAGIVGGLFSLLF, VLITAHAVIMVFFMIMPALFG, GFGNYFVPLLIGAPDMAFPRL, ISFWLLVTAFILLMGSAFVDG, MAIFSLHLTGLSSILGSINLI, PLFVWSILVTAFLIILAMPVL, LFWFFGHPEVYIVILPGFGIV, and IFGYQGMVGAMVIIGFVGFIV. Residue His79 participates in Fe(II)-heme a binding. Cu cation-binding residues include His258 and Tyr262. His307 and His308 together coordinate Cu cation. 2 helical membrane passes run 318 to 338 and 355 to 375; these read ALIYFTAGTMIIAVPTGIKIF and MLFSIGFIILFTIGGVTGIIL. Residue His393 participates in heme a3 binding. A run of 3 helical transmembrane segments spans residues 394 to 414, 431 to 451, and 473 to 493; these read FHYTMSLGALFTAFAGFYYWF, FWITFIGVNLTFFPQHFLGLA, and IGAGISMAAALYFVFIVFYTL. Residue His395 coordinates Fe(II)-heme a.

The protein belongs to the heme-copper respiratory oxidase family.

Its subcellular location is the cell membrane. It carries out the reaction 4 Fe(II)-[cytochrome c] + O2 + 8 H(+)(in) = 4 Fe(III)-[cytochrome c] + 2 H2O + 4 H(+)(out). The protein operates within energy metabolism; oxidative phosphorylation. Its function is as follows. Cytochrome c oxidase is the component of the respiratory chain that catalyzes the reduction of oxygen to water. Subunits 1-3 form the functional core of the enzyme complex. CO I is the catalytic subunit of the enzyme. Electrons originating in cytochrome c are transferred via the copper A center of subunit 2 and heme A of subunit 1 to the bimetallic center formed by heme A3 and copper B. This Rickettsia felis (strain ATCC VR-1525 / URRWXCal2) (Rickettsia azadi) protein is Probable cytochrome c oxidase subunit 1 (ctaD).